Reading from the N-terminus, the 228-residue chain is Large ribosomal subunit protein uL3 (228 aa).

Q151 carries the post-translational modification N5-methylglutamine.

Belongs to the universal ribosomal protein uL3 family. As to quaternary structure, part of the 50S ribosomal subunit. Forms a cluster with proteins L14 and L19. Post-translationally, methylated by PrmB.

Functionally, one of the primary rRNA binding proteins, it binds directly near the 3'-end of the 23S rRNA, where it nucleates assembly of the 50S subunit. The chain is Large ribosomal subunit protein uL3 from Rhizobium meliloti (strain 1021) (Ensifer meliloti).